The primary structure comprises 231 residues: uncharacterized protein (231 aa).

The region spanning 3 to 119 (RADFCIIGLG…RTMGIREALI (117 aa)) is the RCK N-terminal domain. One can recognise an RCK C-terminal domain in the interval 134–221 (HGMETEIINL…VNQYLRYINP (88 aa)).

This is an uncharacterized protein from Mycoplasma pneumoniae (strain ATCC 29342 / M129 / Subtype 1) (Mycoplasmoides pneumoniae).